Here is a 275-residue protein sequence, read N- to C-terminus: MEFWFTEKQTERFGITMKIKRTLHTEKTDFQQLDMVETEEFGNMLLLDGMVMTTEKDEFVYHEMVTHVPLFTHPNPKHVLVVGGGDGGAIREILKHPSVEKATLVDIDGKVIEYSKTYLPTIACALEDERVDVKVADGFMHIAQSANEYDVIMVDSTEPVGPAAKLFERGFYEGISKALKEDGIFVAQTDNPWFHQELVSNVYKDVKEIFPITRLYTANIPTYPSGMWTFTIGSKKHDPLAVEATRFHDVQTKYYTPDIHRAAFVLPKFVQDLLK.

The region spanning 2 to 235 is the PABS domain; sequence EFWFTEKQTE…GMWTFTIGSK (234 aa). Gln-31 is an S-methyl-5'-thioadenosine binding site. Residues His-62 and Asp-86 each coordinate spermidine. S-methyl-5'-thioadenosine is bound by residues Asp-106 and 137–138; that span reads DG. Asp-155 (proton acceptor) is an active-site residue. Residue 155-158 participates in spermidine binding; the sequence is DSTE. Pro-162 is a binding site for S-methyl-5'-thioadenosine.

This sequence belongs to the spermidine/spermine synthase family. Homodimer or homotetramer.

It localises to the cytoplasm. It carries out the reaction S-adenosyl 3-(methylsulfanyl)propylamine + putrescine = S-methyl-5'-thioadenosine + spermidine + H(+). It functions in the pathway amine and polyamine biosynthesis; spermidine biosynthesis; spermidine from putrescine: step 1/1. Catalyzes the irreversible transfer of a propylamine group from the amino donor S-adenosylmethioninamine (decarboxy-AdoMet) to putrescine (1,4-diaminobutane) to yield spermidine. The chain is Polyamine aminopropyltransferase from Shouchella clausii (strain KSM-K16) (Alkalihalobacillus clausii).